A 66-amino-acid polypeptide reads, in one-letter code: KEGYIVDYHTGCKYTCAKLGDNDYCVRECRLRYYQSAHGYCYAFACWCTHLYEQAVVWPLPNKRCK.

The region spanning 1-66 (KEGYIVDYHT…VWPLPNKRCK (66 aa)) is the LCN-type CS-alpha/beta domain. 4 disulfide bridges follow: Cys-12-Cys-65, Cys-16-Cys-41, Cys-25-Cys-46, and Cys-29-Cys-48. Position 66 is a lysine amide (Lys-66).

It belongs to the long (4 C-C) scorpion toxin superfamily. Sodium channel inhibitor family. Beta subfamily. Expressed by the venom gland.

It is found in the secreted. Its function is as follows. Beta toxins bind voltage-independently at site-4 of sodium channels and shift the voltage of activation toward more negative potentials thereby affecting sodium channel activation and promoting spontaneous and repetitive firing. Is active on the human voltage-gated sodium channels Nav1.4/SCN4A, Nav1.5/SCN5A and Nav1.6/SCN8A when tested at 200 nM. In vivo, is toxic to mice when intraperitoneally injected. This chain is Beta-toxin Cbo4, found in Centruroides bonito (Scorpion).